A 528-amino-acid chain; its full sequence is Probable protein phosphatase 2C 51 (528 aa).

A helical transmembrane segment spans residues 8–28 (SLLNLGLLIIFFVFFFLVINC). The 375-residue stretch at 71–445 (RCHTAAIQGR…DNMAAVVVPL (375 aa)) folds into the PPM-type phosphatase domain. Asp-117, Gly-118, Asp-385, and Asp-436 together coordinate Mn(2+).

It belongs to the PP2C family. Mg(2+) serves as cofactor. Requires Mn(2+) as cofactor.

The protein resides in the membrane. It carries out the reaction O-phospho-L-seryl-[protein] + H2O = L-seryl-[protein] + phosphate. The catalysed reaction is O-phospho-L-threonyl-[protein] + H2O = L-threonyl-[protein] + phosphate. In Arabidopsis thaliana (Mouse-ear cress), this protein is Probable protein phosphatase 2C 51.